Here is a 365-residue protein sequence, read N- to C-terminus: Geranylgeranyl pyrophosphate synthase (365 aa).

Positions 1 to 11 (MKPLPSTNGKV) are enriched in polar residues. Positions 1-36 (MKPLPSTNGKVNGNGKHHDSSLSSTSSTSSSSSSDT) are disordered. The segment covering 21-34 (SLSSTSSTSSSSSS) has biased composition (low complexity). Residues Lys78, Arg81, and His110 each contribute to the isopentenyl diphosphate site. Mg(2+)-binding residues include Asp117 and Asp121. Dimethylallyl diphosphate is bound at residue Arg126. Arg127 contributes to the isopentenyl diphosphate binding site. Residues Lys211, Thr212, and Gln247 each coordinate dimethylallyl diphosphate. Asp250 lines the Mg(2+) pocket. Dimethylallyl diphosphate contacts are provided by Asn254, Lys263, and Lys273.

Belongs to the FPP/GGPP synthase family. Mg(2+) serves as cofactor.

It carries out the reaction isopentenyl diphosphate + dimethylallyl diphosphate = (2E)-geranyl diphosphate + diphosphate. The enzyme catalyses isopentenyl diphosphate + (2E)-geranyl diphosphate = (2E,6E)-farnesyl diphosphate + diphosphate. It catalyses the reaction isopentenyl diphosphate + (2E,6E)-farnesyl diphosphate = (2E,6E,10E)-geranylgeranyl diphosphate + diphosphate. In terms of biological role, geranylgeranyl pyrophosphate synthase that catalyzes the trans-addition of the three molecules of IPP onto DMAPP to form geranylgeranyl pyrophosphate. Does not show any monoterpene nor sesquiterpene synthase activity. This Melampsora lini (Rust fungus) protein is Geranylgeranyl pyrophosphate synthase.